A 668-amino-acid polypeptide reads, in one-letter code: Bifunctional polymyxin resistance protein ArnA (668 aa).

A formyltransferase ArnAFT region spans residues 1 to 307 (MSAKTVVFAY…ELGLVDGSLL (307 aa)). The Proton donor; for formyltransferase activity role is filled by histidine 106. Residues arginine 116 and 138 to 142 (VKRAD) contribute to the (6R)-10-formyltetrahydrofolate site. The dehydrogenase ArnADH stretch occupies residues 317-668 (RRTRVLILGV…IERPSNKEAC (352 aa)). Residues aspartate 350 and 371 to 372 (DI) contribute to the NAD(+) site. Residues alanine 396, tyrosine 401, and 435 to 436 (TS) each bind UDP-alpha-D-glucuronate. The active-site Proton acceptor; for decarboxylase activity is the glutamate 437. Residues arginine 463, asparagine 494, 528–537 (RLFDGGEQKR), and tyrosine 615 contribute to the UDP-alpha-D-glucuronate site. Arginine 621 functions as the Proton donor; for decarboxylase activity in the catalytic mechanism.

This sequence in the N-terminal section; belongs to the Fmt family. UDP-L-Ara4N formyltransferase subfamily. The protein in the C-terminal section; belongs to the NAD(P)-dependent epimerase/dehydratase family. UDP-glucuronic acid decarboxylase subfamily. As to quaternary structure, homohexamer, formed by a dimer of trimers.

It catalyses the reaction UDP-alpha-D-glucuronate + NAD(+) = UDP-beta-L-threo-pentopyranos-4-ulose + CO2 + NADH. It carries out the reaction UDP-4-amino-4-deoxy-beta-L-arabinose + (6R)-10-formyltetrahydrofolate = UDP-4-deoxy-4-formamido-beta-L-arabinose + (6S)-5,6,7,8-tetrahydrofolate + H(+). It participates in nucleotide-sugar biosynthesis; UDP-4-deoxy-4-formamido-beta-L-arabinose biosynthesis; UDP-4-deoxy-4-formamido-beta-L-arabinose from UDP-alpha-D-glucuronate: step 1/3. It functions in the pathway nucleotide-sugar biosynthesis; UDP-4-deoxy-4-formamido-beta-L-arabinose biosynthesis; UDP-4-deoxy-4-formamido-beta-L-arabinose from UDP-alpha-D-glucuronate: step 3/3. Its pathway is bacterial outer membrane biogenesis; lipopolysaccharide biosynthesis. In terms of biological role, bifunctional enzyme that catalyzes the oxidative decarboxylation of UDP-glucuronic acid (UDP-GlcUA) to UDP-4-keto-arabinose (UDP-Ara4O) and the addition of a formyl group to UDP-4-amino-4-deoxy-L-arabinose (UDP-L-Ara4N) to form UDP-L-4-formamido-arabinose (UDP-L-Ara4FN). The modified arabinose is attached to lipid A and is required for resistance to polymyxin and cationic antimicrobial peptides. This is Bifunctional polymyxin resistance protein ArnA from Pseudomonas fluorescens (strain Pf0-1).